A 778-amino-acid polypeptide reads, in one-letter code: Endonuclease MutS2 (778 aa).

ATP is bound at residue 328–335; sequence GPNTGGKT. In terms of domain architecture, Smr spans 703-778; it reads LDLRGKRYEE…GSGCTIANLG (76 aa).

Belongs to the DNA mismatch repair MutS family. MutS2 subfamily. As to quaternary structure, homodimer. Binds to stalled ribosomes, contacting rRNA.

In terms of biological role, endonuclease that is involved in the suppression of homologous recombination and thus may have a key role in the control of bacterial genetic diversity. Its function is as follows. Acts as a ribosome collision sensor, splitting the ribosome into its 2 subunits. Detects stalled/collided 70S ribosomes which it binds and splits by an ATP-hydrolysis driven conformational change. Acts upstream of the ribosome quality control system (RQC), a ribosome-associated complex that mediates the extraction of incompletely synthesized nascent chains from stalled ribosomes and their subsequent degradation. Probably generates substrates for RQC. The chain is Endonuclease MutS2 from Streptococcus equi subsp. equi (strain 4047).